The primary structure comprises 206 residues: High frequency lysogenization protein HflD homolog (206 aa).

It belongs to the HflD family.

Its subcellular location is the cytoplasm. The protein localises to the cell inner membrane. This is High frequency lysogenization protein HflD homolog from Pseudomonas syringae pv. syringae (strain B728a).